The chain runs to 371 residues: uncharacterized protein (371 aa).

The 106-residue stretch at 43–148 (DESRVPKFYL…VQAFPTASNP (106 aa)) folds into the EH domain. The interval 179-205 (SMRKKKESDSKEVSAHNSPAKGAAHDL) is disordered.

This is an uncharacterized protein from Caenorhabditis elegans.